A 226-amino-acid chain; its full sequence is PKHD-type hydroxylase TERTU_2553 (226 aa).

The 100-residue stretch at 78 to 177 folds into the Fe2OG dioxygenase domain; sequence KIYPPKFNCY…RVASFIWIQS (100 aa). Fe cation contacts are provided by H96, D98, and H158. R168 is a 2-oxoglutarate binding site.

Fe(2+) is required as a cofactor. L-ascorbate serves as cofactor.

The sequence is that of PKHD-type hydroxylase TERTU_2553 from Teredinibacter turnerae (strain ATCC 39867 / T7901).